The sequence spans 578 residues: MACGFRRSIACQLSRVLALPPESLIKSISAVPVSKKEEVADFQLSVDSLLEDNNHKSQVDTQDQARRLAEKLKCDTVVTAISAGPRTLNFKINRELLTKAVLQQVTEDGCKYGLKSELFSDLPKKRIVVEFSSPNIAKKFHVGHLRSTIIGNFIANLKEALGHQVTRINYIGDWGMQFGLLGTGFQLFGYEEKLQTNPLQHLFDVYVQVNKEATDDKNVTKLAHEFFHRLEMGDTQALSLWQRFRDLSIEEYTQIYKRLGIYFDEYSGESFYREKSQDVLKLLDSKGLLQKTAEGNVVVDLSGTGDLSSVCTVMRSDGTSLYATRDLAAAIHRMDKYNFDTMIYVADKGQRRHFQQVFQMLKIMGYDWAERCQHVPFGIVKGMKTRRGGVTFLEDVLNEVQSRMLQNMASIKTTKQLENPQETAERVGLAAVIIQDFRGTLLSDYQFSWDRVFQSRGDTGVFLQYTHARLCSLEETFGCGYLNDSNVACLQEPQSVSILQHLLRFDEVLYLSSQDLQPKHIVSYLLTLSHLAAVAHKTLQVKDSPPDVAGARLHLFKAVRSVLANGMKLLGITPVCRM.

Residues 1–16 constitute a mitochondrion transit peptide; that stretch reads MACGFRRSIACQLSRV. Residues 133–135, His-144, Tyr-322, Asp-326, and Gln-350 contribute to the L-arginine site; that span reads SPN. The short motif at 133-144 is the 'HIGH' region element; that stretch reads SPNIAKKFHVGH. Lys-568 carries the N6-acetyllysine modification.

It belongs to the class-I aminoacyl-tRNA synthetase family.

The protein localises to the mitochondrion membrane. The enzyme catalyses tRNA(Arg) + L-arginine + ATP = L-arginyl-tRNA(Arg) + AMP + diphosphate. In terms of biological role, catalyzes the attachment of arginine to tRNA(Arg) in a two-step reaction: arginine is first activated by ATP to form Arg-AMP and then transferred to the acceptor end of tRNA(Arg). The sequence is that of Probable arginine--tRNA ligase, mitochondrial (Rars2) from Mus musculus (Mouse).